A 410-amino-acid polypeptide reads, in one-letter code: Arginine deiminase (410 aa).

Cys-400 serves as the catalytic Amidino-cysteine intermediate.

The protein belongs to the arginine deiminase family.

It localises to the cytoplasm. The enzyme catalyses L-arginine + H2O = L-citrulline + NH4(+). It participates in amino-acid degradation; L-arginine degradation via ADI pathway; carbamoyl phosphate from L-arginine: step 1/2. This is Arginine deiminase from Lactococcus lactis subsp. cremoris (strain MG1363).